The primary structure comprises 409 residues: Tyrosine--tRNA ligase (409 aa).

Positions 54 to 63 (PTAPDIHLGH) match the 'HIGH' region motif. Positions 238 to 242 (KMSKS) match the 'KMSKS' region motif. Residue Lys241 coordinates ATP. Residues 347 to 407 (MGILHVLRAS…GKRKFARVNL (61 aa)) form the S4 RNA-binding domain.

Belongs to the class-I aminoacyl-tRNA synthetase family. TyrS type 2 subfamily. As to quaternary structure, homodimer.

Its subcellular location is the cytoplasm. It catalyses the reaction tRNA(Tyr) + L-tyrosine + ATP = L-tyrosyl-tRNA(Tyr) + AMP + diphosphate + H(+). Catalyzes the attachment of tyrosine to tRNA(Tyr) in a two-step reaction: tyrosine is first activated by ATP to form Tyr-AMP and then transferred to the acceptor end of tRNA(Tyr). This chain is Tyrosine--tRNA ligase, found in Bordetella avium (strain 197N).